A 1909-amino-acid polypeptide reads, in one-letter code: Receptor-type tyrosine-protein phosphatase F (1909 aa).

The N-terminal stretch at 1–31 (MVPNTCTSVPLLPVGLPLLLLLSCIQFSSQA) is a signal peptide. Topologically, residues 32-1266 (DSLPNFVRSP…RSVDQPEMLW (1235 aa)) are extracellular. Ig-like C2-type domains follow at residues 35–125 (PNFV…AKLT), 137–225 (PTID…ANLY), and 233–315 (PRFS…AQVS). The cysteines at positions 56 and 109 are disulfide-linked. Residue 68-77 (WMKKGKKVSS) coordinates heparin. Residue N119 is glycosylated (N-linked (GlcNAc...) asparagine). An intrachain disulfide couples C158 to C208. Residues N251 and N296 are each glycosylated (N-linked (GlcNAc...) asparagine). C254 and C299 are oxidised to a cystine. 8 consecutive Fibronectin type-III domains span residues 322–412 (PPTS…TGEQ), 417–511 (PPLH…TQQG), 515–604 (QPSS…TAQS), 609–706 (PPQD…TNED), 711–819 (PPRK…TTGA), 820–914 (VPGK…PEDV), 918–1013 (FPLN…TSPA), and 1014–1098 (FATS…TAPD). Residues 399–418 (GPPSEPVETRTGEQAPSSPP) form a disordered region. N721 is a glycosylation site (N-linked (GlcNAc...) asparagine). N963 and N966 each carry an N-linked (GlcNAc...) asparagine glycan. Residues 1267-1287 (VMGPVLAVVLIIIIVIAILLF) traverse the membrane as a helical segment. The Cytoplasmic segment spans residues 1288–1909 (KRKRASPLPK…YLGSFDHYAT (622 aa)). Tyrosine-protein phosphatase domains lie at 1354-1609 (FSQE…LLEA) and 1641-1900 (MELE…ALEY). Substrate-binding positions include D1518, 1550–1556 (CSAGVGR), and Q1594. C1550 (phosphocysteine intermediate) is an active-site residue. C1841 serves as the catalytic Phosphocysteine intermediate.

It belongs to the protein-tyrosine phosphatase family. Receptor class 2A subfamily.

It is found in the membrane. The catalysed reaction is O-phospho-L-tyrosyl-[protein] + H2O = L-tyrosyl-[protein] + phosphate. In terms of biological role, possible cell adhesion receptor. It possesses an intrinsic protein tyrosine phosphatase activity (PTPase). Its function is as follows. The first PTPase domain has enzymatic activity, while the second one seems to affect the substrate specificity of the first one. This Danio rerio (Zebrafish) protein is Receptor-type tyrosine-protein phosphatase F (ptprf).